We begin with the raw amino-acid sequence, 131 residues long: Profilin-3 (131 aa).

Belongs to the profilin family. In terms of assembly, occurs in many kinds of cells as a complex with monomeric actin in a 1:1 ratio.

Its subcellular location is the cytoplasm. It localises to the cytoskeleton. Its function is as follows. Binds to actin and affects the structure of the cytoskeleton. At high concentrations, profilin prevents the polymerization of actin, whereas it enhances it at low concentrations. By binding to PIP2, it inhibits the formation of IP3 and DG. The protein is Profilin-3 of Malus domestica (Apple).